A 1488-amino-acid chain; its full sequence is Chromosome partition protein MukB (1488 aa).

34–41 (GGNGAGKS) contributes to the ATP binding site. Coiled coils occupy residues 326-418 (LEAD…QYNQ), 444-472 (LDTFQAKEQEATEKLLSLEQKMSVAQTAH), and 509-602 (RHLA…QRAP). The interval 666–783 (PGGAEDQRLN…SLPIFGRAAR (118 aa)) is flexible hinge. 3 coiled-coil regions span residues 835-923 (EAEI…AKLE), 977-1116 (EMLS…AKAG), and 1209-1265 (VEAI…LQSV). The segment at 1049–1074 (ADSGAEERARQRRDELHAQLSNNRSR) is disordered. Residues 1051-1065 (SGAEERARQRRDELH) are compositionally biased toward basic and acidic residues.

Belongs to the SMC family. MukB subfamily. As to quaternary structure, homodimerization via its hinge domain. Binds to DNA via its C-terminal region. Interacts, and probably forms a ternary complex, with MukE and MukF via its C-terminal region. The complex formation is stimulated by calcium or magnesium. Interacts with tubulin-related protein FtsZ.

The protein localises to the cytoplasm. The protein resides in the nucleoid. In terms of biological role, plays a central role in chromosome condensation, segregation and cell cycle progression. Functions as a homodimer, which is essential for chromosome partition. Involved in negative DNA supercoiling in vivo, and by this means organize and compact chromosomes. May achieve or facilitate chromosome segregation by condensation DNA from both sides of a centrally located replisome during cell division. The polypeptide is Chromosome partition protein MukB (Salmonella typhi).